We begin with the raw amino-acid sequence, 80 residues long: Exodeoxyribonuclease 7 small subunit (80 aa).

Belongs to the XseB family. Heterooligomer composed of large and small subunits.

The protein resides in the cytoplasm. The enzyme catalyses Exonucleolytic cleavage in either 5'- to 3'- or 3'- to 5'-direction to yield nucleoside 5'-phosphates.. In terms of biological role, bidirectionally degrades single-stranded DNA into large acid-insoluble oligonucleotides, which are then degraded further into small acid-soluble oligonucleotides. This Escherichia coli (strain SE11) protein is Exodeoxyribonuclease 7 small subunit.